The primary structure comprises 286 residues: Bifunctional protein FolD (286 aa).

Residues 165-167 (GRS) and serine 190 each bind NADP(+).

It belongs to the tetrahydrofolate dehydrogenase/cyclohydrolase family. In terms of assembly, homodimer.

It carries out the reaction (6R)-5,10-methylene-5,6,7,8-tetrahydrofolate + NADP(+) = (6R)-5,10-methenyltetrahydrofolate + NADPH. It catalyses the reaction (6R)-5,10-methenyltetrahydrofolate + H2O = (6R)-10-formyltetrahydrofolate + H(+). It functions in the pathway one-carbon metabolism; tetrahydrofolate interconversion. Its function is as follows. Catalyzes the oxidation of 5,10-methylenetetrahydrofolate to 5,10-methenyltetrahydrofolate and then the hydrolysis of 5,10-methenyltetrahydrofolate to 10-formyltetrahydrofolate. The sequence is that of Bifunctional protein FolD from Staphylococcus aureus (strain USA300).